Here is a 1188-residue protein sequence, read N- to C-terminus: DNA-directed RNA polymerase subunit beta (1188 aa).

The protein belongs to the RNA polymerase beta chain family. In terms of assembly, the RNAP catalytic core consists of 2 alpha, 1 beta, 1 beta' and 1 omega subunit. When a sigma factor is associated with the core the holoenzyme is formed, which can initiate transcription.

It catalyses the reaction RNA(n) + a ribonucleoside 5'-triphosphate = RNA(n+1) + diphosphate. Functionally, DNA-dependent RNA polymerase catalyzes the transcription of DNA into RNA using the four ribonucleoside triphosphates as substrates. This chain is DNA-directed RNA polymerase subunit beta, found in Streptococcus equi subsp. zooepidemicus (strain H70).